We begin with the raw amino-acid sequence, 332 residues long: Ribosomal RNA small subunit methyltransferase H (332 aa).

S-adenosyl-L-methionine contacts are provided by residues 37-39 (GGY), Asp-55, Phe-82, Asp-103, and Gln-110. The interval 281 to 332 (TKRPVTPSDEETAANPRARSAKLRAGERTAAPAQPEAPLPHWPTLASVMGRR) is disordered.

The protein belongs to the methyltransferase superfamily. RsmH family.

It localises to the cytoplasm. The catalysed reaction is cytidine(1402) in 16S rRNA + S-adenosyl-L-methionine = N(4)-methylcytidine(1402) in 16S rRNA + S-adenosyl-L-homocysteine + H(+). Specifically methylates the N4 position of cytidine in position 1402 (C1402) of 16S rRNA. The chain is Ribosomal RNA small subunit methyltransferase H from Rhodopseudomonas palustris (strain BisA53).